Consider the following 872-residue polypeptide: HTH-type transcriptional regulator AlkS (872 aa).

The region spanning 805-870 is the HTH luxR-type domain; sequence LTNTQSTITI…RAVSEARLRG (66 aa). The H-T-H motif DNA-binding region spans 829–848; that stretch reads NKEIAERLLITEDTVKWHLK.

The protein operates within hydrocarbon metabolism; alkane degradation. Functionally, this protein activates the expression of AlkB1 in the presence of alkanes. This Alcanivorax borkumensis (strain ATCC 700651 / DSM 11573 / NCIMB 13689 / SK2) protein is HTH-type transcriptional regulator AlkS (alkS).